We begin with the raw amino-acid sequence, 127 residues long: Apolipoprotein C-IV (127 aa).

The N-terminal stretch at 1–27 (MSLLRNRLQDLPALCLCVLVLACIGAC) is a signal peptide. An N-linked (GlcNAc...) asparagine glycan is attached at asparagine 63.

Belongs to the apolipoprotein C4 family.

It localises to the secreted. Its function is as follows. May participate in lipoprotein metabolism. This chain is Apolipoprotein C-IV (APOC4), found in Colobus guereza (Mantled guereza).